The following is a 59-amino-acid chain: Large ribosomal subunit protein bL32 (59 aa).

The disordered stretch occupies residues Met-1 to Glu-59. Positions Arg-49–Glu-59 are enriched in basic residues.

The protein belongs to the bacterial ribosomal protein bL32 family.

The protein is Large ribosomal subunit protein bL32 (rpmF) of Neisseria meningitidis serogroup A / serotype 4A (strain DSM 15465 / Z2491).